An 862-amino-acid chain; its full sequence is Semaphorin-4D (862 aa).

The N-terminal stretch at 1–21 is a signal peptide; it reads MRMCTPIRGLLMALAVMFGTA. The 479-residue stretch at 22–500 folds into the Sema domain; that stretch reads MAFAPIPRIT…SNSGVVQAPL (479 aa). Topologically, residues 22-734 are extracellular; the sequence is MAFAPIPRIT…TMYLKSSDNR (713 aa). N-linked (GlcNAc...) asparagine glycosylation is found at asparagine 49 and asparagine 77. 2 disulfides stabilise this stretch: cysteine 97-cysteine 108 and cysteine 126-cysteine 135. N-linked (GlcNAc...) asparagine glycans are attached at residues asparagine 139 and asparagine 191. 2 cysteine pairs are disulfide-bonded: cysteine 257/cysteine 370 and cysteine 281/cysteine 326. Asparagine 329, asparagine 379, and asparagine 419 each carry an N-linked (GlcNAc...) asparagine glycan. The 50-residue stretch at 502–551 folds into the PSI domain; it reads FCGKHGTCEDCVLARDPYCAWSPPTATCVALHQTESPSRGLIQEMSGDAS. Intrachain disulfides connect cysteine 503-cysteine 520, cysteine 509-cysteine 553, cysteine 512-cysteine 529, and cysteine 576-cysteine 624. The Ig-like C2-type domain occupies 554-636; it reads PDKSKGSYRQ…EERVKNKTVF (83 aa). N-linked (GlcNAc...) asparagine glycosylation is found at asparagine 613 and asparagine 632. The chain crosses the membrane as a helical span at residues 735-755; the sequence is LLMSLFLFFFVLFLCLFFYNC. Residues 756–862 are Cytoplasmic-facing; the sequence is YKGYLPRQCL…KFADSDADGD (107 aa). The interval 794-837 is disordered; the sequence is VEPGSFSQQNGEHPKPALDTGYETEQDTITSKVPTDREDSQRID. Basic and acidic residues predominate over residues 827–837; sequence PTDREDSQRID. A Phosphoserine modification is found at serine 833.

It belongs to the semaphorin family. Homodimer. Interacts with PLXNB2. Interacts with PLXNB1. As to expression, strongly expressed in skeletal muscle, peripheral blood lymphocytes, spleen, and thymus and also expressed at lower levels in testes, brain, kidney, small intestine, prostate, heart, placenta, lung and pancreas, but not in colon and liver.

The protein localises to the cell membrane. Its function is as follows. Cell surface receptor for PLXNB1 and PLXNB2 that plays an important role in cell-cell signaling. Regulates GABAergic synapse development. Promotes the development of inhibitory synapses in a PLXNB1-dependent manner. Modulates the complexity and arborization of developing neurites in hippocampal neurons by activating PLXNB1 and interaction with PLXNB1 mediates activation of RHOA. Promotes the migration of cerebellar granule cells. Plays a role in the immune system; induces B-cells to aggregate and improves their viability (in vitro). Induces endothelial cell migration through the activation of PTK2B/PYK2, SRC, and the phosphatidylinositol 3-kinase-AKT pathway. In Homo sapiens (Human), this protein is Semaphorin-4D (SEMA4D).